A 421-amino-acid polypeptide reads, in one-letter code: MLTKAPRGTKDILPQESSKWHALEETAKKISNLYGFNEVRFPIFEHTELFTRSVGETSDIVSKEMYTFTDRGDRSLTLRPEGTAPAARLYVEHKLFNEPQPVKYYYIGPMFRYDRPQAGRYRQFHQFGVEVFGSLEPETDVEVMKLLLDYFEALGLSGLELKLNSVGCKECRQKYLNELSNYFEGKIDHICQDCYQRYQTNPMRVLDCKKKSCREAIGEDVPLIVNYLCQDCATHFDKVKEILTSLNLPYQIDPHLVRGLDYYTKTAFEVVMPSLGAQDALGGGGRYDYLVEECGGPPTPGVGFAVGLERILLALEQKEINLDQEEKLDFYFIATGEEAKQEAFKLLATVREEGYSAVMDFERRSMRAQMKRANKANARFSLILGEAELNEQTCQIKDMEAGEQFQVPLKSFEERIKEIAG.

Belongs to the class-II aminoacyl-tRNA synthetase family. In terms of assembly, homodimer.

Its subcellular location is the cytoplasm. It catalyses the reaction tRNA(His) + L-histidine + ATP = L-histidyl-tRNA(His) + AMP + diphosphate + H(+). The sequence is that of Histidine--tRNA ligase from Natranaerobius thermophilus (strain ATCC BAA-1301 / DSM 18059 / JW/NM-WN-LF).